Reading from the N-terminus, the 137-residue chain is Cytochrome c-type biogenesis protein CcmE (137 aa).

At M1–R8 the chain is on the cytoplasmic side. Residues L9–N29 form a helical; Signal-anchor for type II membrane protein membrane-spanning segment. Residues L30 to I137 lie on the Periplasmic side of the membrane. Heme-binding residues include H120 and Y124.

It belongs to the CcmE/CycJ family.

The protein localises to the cell inner membrane. Its function is as follows. Heme chaperone required for the biogenesis of c-type cytochromes. Transiently binds heme delivered by CcmC and transfers the heme to apo-cytochromes in a process facilitated by CcmF and CcmH. The chain is Cytochrome c-type biogenesis protein CcmE from Rickettsia bellii (strain OSU 85-389).